Consider the following 1394-residue polypeptide: Cyclic nucleotide-gated channel beta-1 (1394 aa).

Disordered stretches follow at residues 1-95 (MLGW…AHSS), 112-253 (VPQP…QDSA), and 271-675 (VIRG…SQNS). Residues 1–762 (MLGWVQRVLP…WKKYQFPQSI (762 aa)) are Cytoplasmic-facing. Composition is skewed to polar residues over residues 68 to 86 (PQGT…QAQV) and 116 to 125 (AHSSRPSQNI). Basic and acidic residues-rich tracts occupy residues 300–312 (EESH…VDPH) and 336–355 (DEEK…RIQE). The span at 356 to 387 (EKEDEEEEKEDGEEEEEEGREKEEEEGEEKEE) shows a compositional bias: acidic residues. The span at 388–408 (EEGREKEEEEGEKKEEEGREK) shows a compositional bias: basic and acidic residues. Residues 409–418 (EEEEGGEKED) show a composition bias toward acidic residues. Residues 419 to 433 (EEGREKEEEEGRGKE) are compositionally biased toward basic and acidic residues. Composition is skewed to acidic residues over residues 452–464 (EGRE…EEEQ) and 481–490 (DRSEESETQD). Low complexity-rich tracts occupy residues 493–508 (EVGG…GAQA) and 529–554 (EVGG…AQDQ). The span at 654–675 (DPTSPQGTDDQDRATSTASQNS) shows a compositional bias: polar residues. Residues 671–681 (ASQNSAIINDR) form a calmodulin-binding CaM1 region. Residues 682-692 (LQELVKLFKER) carry the IQ-like motif. Residues 699-732 (KLIDPDVTSDEESPKPSPAKKAPEPAPEVKPAEA) are disordered. A helical membrane pass occupies residues 763-793 (DPLTNLMYILWLFFVVLAWNWNCWLIPVRWA). The Extracellular portion of the chain corresponds to 794–798 (FPYQT). Residues 799 to 825 (PDNIHLWLLMDYLCDLIYLLDITVFQM) form a helical membrane-spanning segment. The Cytoplasmic segment spans residues 826 to 837 (RLQFVRGGDIIT). Residues 838 to 861 (DKKEMRNNYVKSQRFKMDMLCLLP) traverse the membrane as a helical segment. Over 862–872 (LDLLYLKFGVN) the chain is Extracellular. A helical transmembrane segment spans residues 873 to 887 (PLLRLPRCLKYMAFF). The Cytoplasmic portion of the chain corresponds to 888-900 (EFNNRLESILSKA). The tract at residues 900–999 (AYVYRVIRTT…IGQMRDVVGA (100 aa)) is ion conduction pathway. Residues 901–922 (YVYRVIRTTAYLLYSLHLNSCL) form a helical membrane-spanning segment. Residues 923 to 931 (YYWASAYEG) are Extracellular-facing. 2 helical membrane passes run 932-974 (LGST…EIVF) and 975-1002 (QGLN…AATA). Residues 959 to 962 (TIGG) are selectivity filter. Residues 1003-1394 (GQTYYRSCMD…EEARKEKEEE (392 aa)) lie on the Cytoplasmic side of the membrane. Positions 1082–1198 (RQMIFDMLKR…LLRKKARRML (117 aa)) are cyclic nucleotide-binding domain. The 3',5'-cyclic GMP site is built by glycine 1143, glutamate 1144, serine 1146, arginine 1156, and threonine 1157. Arginine 1156 lines the 3',5'-cyclic AMP pocket. Positions 1261–1267 (QQQLLEQ) are calmodulin-binding CaM2. Residues 1265-1394 (LEQAKSSEDA…EEARKEKEEE (130 aa)) form a disordered region. Pro residues predominate over residues 1285-1326 (EQPPRPEPPAPEAPAPEPTAPEPLAPEAPAPEAPAPSSPPPA). Composition is skewed to basic and acidic residues over residues 1329 to 1345 (ERPE…EHPV) and 1364 to 1376 (VPEK…KKEE).

This sequence belongs to the cyclic nucleotide-gated cation channel (TC 1.A.1.5) family. CNGB1 subfamily. The rod cyclic nucleotide-gated channel is a heterotetramer composed of CNGA1 and CNGB1 subunits with 3:1 stoichiometry. CNGA1:CNGB1 channel binds Ca(2+)-bound CALM1 via CaM1 and CaM2 regions of the CNGB1 subunit; this interaction modulates the affinity of the channel for cNMPs in response to intracellular Ca(2+) levels. The olfactory cyclic nucleotide-gated channel is a heterotetramer composed of CNGA2, CNGA4 and CNGB1 subunits with 2:1:1 stoichiometry. In terms of tissue distribution, retina, testis, kidney, heart and brain.

It localises to the membrane. It catalyses the reaction Ca(2+)(in) = Ca(2+)(out). The enzyme catalyses Na(+)(in) = Na(+)(out). The catalysed reaction is K(+)(in) = K(+)(out). It carries out the reaction NH4(+)(in) = NH4(+)(out). It catalyses the reaction Rb(+)(in) = Rb(+)(out). The enzyme catalyses Li(+)(in) = Li(+)(out). The catalysed reaction is Cs(+)(in) = Cs(+)(out). Its function is as follows. Pore-forming subunit of the rod cyclic nucleotide-gated channel. Mediates rod photoresponses at dim light converting transient changes in intracellular cGMP levels into electrical signals. In the dark, cGMP levels are high and keep the channel open enabling a steady inward current carried by Na(+) and Ca(2+) ions that leads to membrane depolarization and neurotransmitter release from synaptic terminals. Upon photon absorption cGMP levels decline leading to channel closure and membrane hyperpolarization that ultimately slows neurotransmitter release and signals the presence of light, the end point of the phototransduction cascade. Pore-forming subunit of the olfactory cyclic nucleotide-gated channel. Operates in the cilia of olfactory sensory neurons where chemical stimulation of the odorant is converted to an electrical signal. Mediates odorant-induced cAMP-dependent Ca(2+) influx triggering neuron depolarization. The rise of intracellular Ca(2+) levels potentiates the olfactory response by activating Ca(2+)-dependent Cl(-) channels, but it also serves as a negative feedback signal to desensitize the channel for rapid adaptation to odorants. Conducts cGMP- and cAMP-gated ion currents, with permeability for monovalent and divalent cations. The selectivity for Ca(2+) over Na(+) increases with cGMP concentrations, whereas the selectivity among monovalent ions is independent of the cGMP levels. This Bos taurus (Bovine) protein is Cyclic nucleotide-gated channel beta-1.